A 206-amino-acid chain; its full sequence is Ras-related protein Ral-B (206 aa).

21–29 (GSGGVGKSA) provides a ligand contact to GTP. Residues 43–51 (YEPTKADSY) carry the Effector region motif. Residues 68–72 (DTAGQ), 128–131 (NKSD), and 158–160 (SAK) contribute to the GTP site. Positions 180-189 (KMSENKDKNG) are enriched in basic and acidic residues. A disordered region spans residues 180–206 (KMSENKDKNGKKSGKNKKSFKERCCLL). Cysteine 203 carries the post-translational modification Cysteine methyl ester. Cysteine 203 carries S-geranylgeranyl cysteine lipidation. Positions 204 to 206 (CLL) are cleaved as a propeptide — removed in mature form.

The protein belongs to the small GTPase superfamily. Ras family. In terms of assembly, interacts with EXOC2/Sec5 and EXOC8/Exo84. Interacts (via effector domain) with RALBP1. Prenylation is essential for membrane localization. Post-translationally, the farnesylated form confers resistance to the proapoptotic and anti-anchorage-dependent growth effects of some geranylgeranyltransferase I inhibitors.

It localises to the cell membrane. The protein resides in the midbody. It catalyses the reaction GTP + H2O = GDP + phosphate + H(+). Its activity is regulated as follows. Alternates between an inactive form bound to GDP and an active form bound to GTP. Activated by a guanine nucleotide-exchange factor (GEF) and inactivated by a GTPase-activating protein (GAP). In terms of biological role, multifunctional GTPase involved in a variety of cellular processes including gene expression, cell migration, cell proliferation, oncogenic transformation and membrane trafficking. Accomplishes its multiple functions by interacting with distinct downstream effectors. Acts as a GTP sensor for GTP-dependent exocytosis of dense core vesicles. Required both to stabilize the assembly of the exocyst complex and to localize functional exocyst complexes to the leading edge of migrating cells. Required for suppression of apoptosis. In late stages of cytokinesis, upon completion of the bridge formation between dividing cells, mediates exocyst recruitment to the midbody to drive abscission. Involved in ligand-dependent receptor mediated endocytosis of the EGF and insulin receptors. The chain is Ras-related protein Ral-B (RALB) from Macaca fascicularis (Crab-eating macaque).